We begin with the raw amino-acid sequence, 283 residues long: Protein/nucleic acid deglycase HchA (283 aa).

Zn(2+) is bound by residues His-86, Glu-91, and His-123. The active-site Nucleophile is the Cys-185.

This sequence belongs to the peptidase C56 family. HchA subfamily. In terms of assembly, homodimer.

The protein resides in the cytoplasm. It carries out the reaction N(omega)-(1-hydroxy-2-oxopropyl)-L-arginyl-[protein] + H2O = lactate + L-arginyl-[protein] + H(+). The enzyme catalyses N(6)-(1-hydroxy-2-oxopropyl)-L-lysyl-[protein] + H2O = lactate + L-lysyl-[protein] + H(+). It catalyses the reaction S-(1-hydroxy-2-oxopropyl)-L-cysteinyl-[protein] + H2O = lactate + L-cysteinyl-[protein] + H(+). The catalysed reaction is N(omega)-(1-hydroxy-2-oxoethyl)-L-arginyl-[protein] + H2O = L-arginyl-[protein] + glycolate + H(+). It carries out the reaction N(6)-(1-hydroxy-2-oxoethyl)-L-lysyl-[protein] + H2O = glycolate + L-lysyl-[protein] + H(+). The enzyme catalyses S-(1-hydroxy-2-oxoethyl)-L-cysteinyl-[protein] + H2O = glycolate + L-cysteinyl-[protein] + H(+). It catalyses the reaction N(2)-(1-hydroxy-2-oxopropyl)-dGTP + H2O = lactate + dGTP + H(+). The catalysed reaction is N(2)-(1-hydroxy-2-oxopropyl)-GTP + H2O = lactate + GTP + H(+). It carries out the reaction N(2)-(1-hydroxy-2-oxopropyl)-GDP + H2O = lactate + GDP + H(+). The enzyme catalyses N(2)-(1-hydroxy-2-oxopropyl)-GMP + H2O = lactate + GMP + H(+). It catalyses the reaction N(2)-(1-hydroxy-2-oxoethyl)-dGTP + H2O = dGTP + glycolate + H(+). The catalysed reaction is N(2)-(1-hydroxy-2-oxoethyl)-GTP + H2O = glycolate + GTP + H(+). It carries out the reaction N(2)-(1-hydroxy-2-oxoethyl)-GDP + H2O = glycolate + GDP + H(+). The enzyme catalyses N(2)-(1-hydroxy-2-oxoethyl)-GMP + H2O = glycolate + GMP + H(+). It catalyses the reaction an N(2)-(1-hydroxy-2-oxopropyl)-guanosine in RNA + H2O = a guanosine in RNA + lactate + H(+). The catalysed reaction is an N(2)-(1-hydroxy-2-oxopropyl)-2'-deoxyguanosine in DNA + H2O = a 2'-deoxyguanosine in DNA + lactate + H(+). It carries out the reaction an N(2)-(1-hydroxy-2-oxoethyl)-guanosine in RNA + H2O = a guanosine in RNA + glycolate + H(+). The enzyme catalyses an N(2)-(1-hydroxy-2-oxoethyl)-2'-deoxyguanosine in DNA + H2O = a 2'-deoxyguanosine in DNA + glycolate + H(+). Protein and nucleotide deglycase that catalyzes the deglycation of the Maillard adducts formed between amino groups of proteins or nucleotides and reactive carbonyl groups of glyoxals. Thus, functions as a protein deglycase that repairs methylglyoxal- and glyoxal-glycated proteins, and releases repaired proteins and lactate or glycolate, respectively. Deglycates cysteine, arginine and lysine residues in proteins, and thus reactivates these proteins by reversing glycation by glyoxals. Acts on early glycation intermediates (hemithioacetals and aminocarbinols), preventing the formation of Schiff bases and advanced glycation endproducts (AGE). Also functions as a nucleotide deglycase able to repair glycated guanine in the free nucleotide pool (GTP, GDP, GMP, dGTP) and in DNA and RNA. Is thus involved in a major nucleotide repair system named guanine glycation repair (GG repair), dedicated to reversing methylglyoxal and glyoxal damage via nucleotide sanitization and direct nucleic acid repair. Plays an important role in protecting cells from carbonyl stress. The polypeptide is Protein/nucleic acid deglycase HchA (Escherichia coli O139:H28 (strain E24377A / ETEC)).